Consider the following 64-residue polypeptide: MPKMKTHKGAAKRFKKTGKGKIKRRKAFKSHILTKKTPKRKRNLRKPTVMKNKAEEKRIKRLLP.

Residues 1 to 45 show a composition bias toward basic residues; that stretch reads MPKMKTHKGAAKRFKKTGKGKIKRRKAFKSHILTKKTPKRKRNLR. The disordered stretch occupies residues 1-64; that stretch reads MPKMKTHKGA…EEKRIKRLLP (64 aa).

The protein belongs to the bacterial ribosomal protein bL35 family.

This Natranaerobius thermophilus (strain ATCC BAA-1301 / DSM 18059 / JW/NM-WN-LF) protein is Large ribosomal subunit protein bL35.